Here is a 257-residue protein sequence, read N- to C-terminus: MSDVVVVIPARYGASRLPGKPLLDLHGEPMIARVWQRACKSDATRVVIATDDERIEAAMQPYGADVMLTAPDHPSGTDRLAEVAARLELDADTIVVNVQGDEPLLPPALIDQVVRRLADDTTASIATLAEPIGDVETLFNPNVVKVVRDLHGRALYFSRAPVPWDREHFATRPDCLATDAWLRHIGLYAYRAGFLAAYVDWLPSPLEQLEQLEQLRAMHHGHRIQVALAAEAHPAGVDTEADLARVRRLIAEGEGAA.

This sequence belongs to the KdsB family.

It localises to the cytoplasm. The catalysed reaction is 3-deoxy-alpha-D-manno-oct-2-ulosonate + CTP = CMP-3-deoxy-beta-D-manno-octulosonate + diphosphate. The protein operates within nucleotide-sugar biosynthesis; CMP-3-deoxy-D-manno-octulosonate biosynthesis; CMP-3-deoxy-D-manno-octulosonate from 3-deoxy-D-manno-octulosonate and CTP: step 1/1. Its pathway is bacterial outer membrane biogenesis; lipopolysaccharide biosynthesis. Activates KDO (a required 8-carbon sugar) for incorporation into bacterial lipopolysaccharide in Gram-negative bacteria. The sequence is that of 3-deoxy-manno-octulosonate cytidylyltransferase from Chromohalobacter salexigens (strain ATCC BAA-138 / DSM 3043 / CIP 106854 / NCIMB 13768 / 1H11).